We begin with the raw amino-acid sequence, 586 residues long: MDDEETSEINSVQGRDEDVQLEDHSQAQGLQDRRVDAMEQAWNNAIQDELSPPPEEAFQDPLAIEGEGGNAPEAMVEDGLQDDTASEGSHPSSDMSLESPGSEDDSDLERLPRWMIPQNRLRSAVDMMVSQARNRDGGIAALLNRDNFLQRVRSMVFSQERRRSRTSEETSQEDVEQPEDPPPQQPPRPPIDIGFDTNLPAEHSYFGNHLSRVPGVDYLEVGSVHHMLIFLHQHILFPGEVLPFMIDGRMFDEDMPGLDGLIFGVGFPLMQPPEDNQLKLYGVTCQIYEKGESGRGLVFYKSRALQRIVINFDDIQGSPQYIARNPTSKCFSKVKILPEYFLPEPLQSVDMGSMARFRDIPSMRDKYRRFQLSTTNWPSDACQEYSFASIVERARQRLESQKIDTMPKCPIQLSFWLVRNLHLTEKMMRLTFLTDSVNTRLQLIKSTFTDESLFFCRYCNSSLAHCADLFAMSKHGVQTQYCNPDGYIHETNTVYRVMSHAIGYSGEPSTKFSWFPGYQWHIILCKFCAQHVGWEFKAVQPNLTPRVFFGLAGSSVRIGKASENTSFNGSPYVVRNMLRLISNEME.

Disordered regions lie at residues 1–114 (MDDE…LPRW) and 158–194 (SQER…IDIG). Positions 14–37 (GRDEDVQLEDHSQAQGLQDRRVDA) are enriched in basic and acidic residues. Over residues 75–85 (MVEDGLQDDTA) the composition is skewed to acidic residues. The span at 86 to 96 (SEGSHPSSDMS) shows a compositional bias: polar residues. Over residues 159 to 168 (QERRRSRTSE) the composition is skewed to basic and acidic residues. Residues 170–179 (TSQEDVEQPE) show a composition bias toward acidic residues. Positions 180-190 (DPPPQQPPRPP) are enriched in pro residues. The Lon N-terminal domain maps to 226–452 (HMLIFLHQHI…LIKSTFTDES (227 aa)). The 110-residue stretch at 451–560 (ESLFFCRYCN…LAGSSVRIGK (110 aa)) folds into the CULT domain. The Zn(2+) site is built by Cys-456, Cys-459, Cys-525, and Cys-528.

The protein belongs to the CRBN family. Likely a component of a DCX (DDB1-CUL4-X-box) protein ligase complex. May interact with pic/DDB1. Post-translationally, ubiquitinated.

It is found in the nucleus. Its pathway is protein modification; protein ubiquitination. Functionally, substrate recognition component of a DCX (DDB1-CUL4-X-box) E3 protein ligase complex that mediates the ubiquitination and subsequent proteasomal degradation of target proteins. Has an essential role in mediating growth by negatively regulating insulin signaling. It also has a role in maintaining presynaptic function in the neuromuscular junction synapses of third-instar larvae. In Drosophila erecta (Fruit fly), this protein is Protein cereblon.